A 142-amino-acid polypeptide reads, in one-letter code: Nucleoside diphosphate kinase (142 aa).

Lys11, Phe59, Arg87, Thr93, Arg104, and Asn114 together coordinate ATP. The active-site Pros-phosphohistidine intermediate is His117.

Belongs to the NDK family. As to quaternary structure, homotetramer. Mg(2+) serves as cofactor.

It localises to the cytoplasm. The catalysed reaction is a 2'-deoxyribonucleoside 5'-diphosphate + ATP = a 2'-deoxyribonucleoside 5'-triphosphate + ADP. The enzyme catalyses a ribonucleoside 5'-diphosphate + ATP = a ribonucleoside 5'-triphosphate + ADP. Its function is as follows. Major role in the synthesis of nucleoside triphosphates other than ATP. The ATP gamma phosphate is transferred to the NDP beta phosphate via a ping-pong mechanism, using a phosphorylated active-site intermediate. The sequence is that of Nucleoside diphosphate kinase from Yersinia pseudotuberculosis serotype I (strain IP32953).